A 60-amino-acid chain; its full sequence is DNA-directed RNA polymerase subunit Rpo6 (60 aa).

The protein belongs to the archaeal Rpo6/eukaryotic RPB6 RNA polymerase subunit family. Part of the RNA polymerase complex.

The protein resides in the cytoplasm. It catalyses the reaction RNA(n) + a ribonucleoside 5'-triphosphate = RNA(n+1) + diphosphate. In terms of biological role, DNA-dependent RNA polymerase (RNAP) catalyzes the transcription of DNA into RNA using the four ribonucleoside triphosphates as substrates. The protein is DNA-directed RNA polymerase subunit Rpo6 of Halobacterium salinarum (strain ATCC 700922 / JCM 11081 / NRC-1) (Halobacterium halobium).